Consider the following 765-residue polypeptide: Probable dehydratase PflD (765 aa).

The PFL domain maps to 3 to 637 (NRISRLKTAL…VVGATPDGRF (635 aa)). Residues 645 to 765 (GGLSPMLGQD…DIIRRTAHQL (121 aa)) form the Glycine radical domain. G741 is subject to Glycine radical.

Belongs to the glycyl radical enzyme (GRE) family.

In terms of biological role, probably shows dehydratase activity. The chain is Probable dehydratase PflD (pflD) from Escherichia coli (strain K12).